The chain runs to 270 residues: 3-phenylpropionate-dihydrodiol/cinnamic acid-dihydrodiol dehydrogenase (270 aa).

10–34 (FITGGGSGLGLALVERFIEEGAQVA) contributes to the NAD(+) binding site. Ser-143 provides a ligand contact to substrate. The active-site Proton acceptor is the Tyr-156.

This sequence belongs to the short-chain dehydrogenases/reductases (SDR) family.

The enzyme catalyses 3-(cis-5,6-dihydroxycyclohexa-1,3-dien-1-yl)propanoate + NAD(+) = 3-(2,3-dihydroxyphenyl)propanoate + NADH + H(+). It carries out the reaction (2E)-3-(cis-5,6-dihydroxycyclohexa-1,3-dien-1-yl)prop-2-enoate + NAD(+) = (2E)-3-(2,3-dihydroxyphenyl)prop-2-enoate + NADH + H(+). Its pathway is aromatic compound metabolism; 3-phenylpropanoate degradation. In terms of biological role, converts 3-phenylpropionate-dihydrodiol (PP-dihydrodiol) and cinnamic acid-dihydrodiol (CI-dihydrodiol) into 3-(2,3-dihydroxylphenyl)propanoic acid (DHPP) and 2,3-dihydroxicinnamic acid (DHCI), respectively. The chain is 3-phenylpropionate-dihydrodiol/cinnamic acid-dihydrodiol dehydrogenase from Escherichia coli O8 (strain IAI1).